A 320-amino-acid chain; its full sequence is Cytochrome c biogenesis protein CcsA (320 aa).

A run of 8 helical transmembrane segments spans residues 13–33 (ISFS…FLLV), 46–66 (GMIV…IYSG), 73–93 (LYES…VSYL), 102–122 (LSAI…SGLL), 147–167 (MVLG…LLVI), 226–246 (IISL…VWAN), 259–274 (ETWA…IYFH), and 289–309 (VASM…LLGI).

The protein belongs to the CcmF/CycK/Ccl1/NrfE/CcsA family. May interact with Ccs1.

The protein resides in the plastid. It localises to the chloroplast thylakoid membrane. Functionally, required during biogenesis of c-type cytochromes (cytochrome c6 and cytochrome f) at the step of heme attachment. The sequence is that of Cytochrome c biogenesis protein CcsA from Gossypium hirsutum (Upland cotton).